Consider the following 185-residue polypeptide: MINEIQNDAQERMGKSVDALKNQLVKIRTGRAHPSLLDTIYVEYYGANTPLKQLANVVAEDSRTLAITVFDRELTPKIEKAIMMSDLGLNPMSAGTVIRVPLPPLTEERRRDLVKIVRKEAEQGRVAIRNIRRDANADLKALLKDKEISEDDDRRAQDEIQKLTDVAVKNIEAVLEVKEKELMEV.

The protein belongs to the RRF family.

Its subcellular location is the cytoplasm. In terms of biological role, responsible for the release of ribosomes from messenger RNA at the termination of protein biosynthesis. May increase the efficiency of translation by recycling ribosomes from one round of translation to another. The chain is Ribosome-recycling factor from Photobacterium profundum (strain SS9).